Consider the following 158-residue polypeptide: Endoribonuclease YbeY (158 aa).

Residues histidine 114, histidine 118, and histidine 124 each coordinate Zn(2+).

It belongs to the endoribonuclease YbeY family. Zn(2+) serves as cofactor.

It is found in the cytoplasm. Its function is as follows. Single strand-specific metallo-endoribonuclease involved in late-stage 70S ribosome quality control and in maturation of the 3' terminus of the 16S rRNA. The chain is Endoribonuclease YbeY from Legionella pneumophila (strain Paris).